A 430-amino-acid chain; its full sequence is Enolase (430 aa).

Gln-167 contacts (2R)-2-phosphoglycerate. Catalysis depends on Glu-209, which acts as the Proton donor. 3 residues coordinate Mg(2+): Asp-245, Glu-286, and Asp-313. (2R)-2-phosphoglycerate contacts are provided by Lys-338, Arg-367, Ser-368, and Lys-389. The active-site Proton acceptor is Lys-338.

It belongs to the enolase family. It depends on Mg(2+) as a cofactor.

It is found in the cytoplasm. Its subcellular location is the secreted. The protein localises to the cell surface. The catalysed reaction is (2R)-2-phosphoglycerate = phosphoenolpyruvate + H2O. The protein operates within carbohydrate degradation; glycolysis; pyruvate from D-glyceraldehyde 3-phosphate: step 4/5. Its function is as follows. Catalyzes the reversible conversion of 2-phosphoglycerate (2-PG) into phosphoenolpyruvate (PEP). It is essential for the degradation of carbohydrates via glycolysis. The chain is Enolase from Synechococcus sp. (strain CC9605).